The following is a 287-amino-acid chain: (S)-phenoxypropionate/alpha-ketoglutarate-dioxygenase (287 aa).

The Fe cation site is built by His102 and Asp104. Thr129 and Trp242 together coordinate 2-oxoglutarate. His257 is a binding site for Fe cation. Arg268 serves as a coordination point for 2-oxoglutarate.

This sequence belongs to the TfdA dioxygenase family. In terms of assembly, monomer. It depends on Fe cation as a cofactor. The cofactor is L-ascorbate.

It catalyses the reaction (S)-2-(4-chloro-2-methylphenoxy)propanoate + 2-oxoglutarate + O2 = 2-methyl-4-chlorophenol + pyruvate + succinate + CO2. The catalysed reaction is (S)-(2,4-dichlorophenoxy)propanoate + 2-oxoglutarate + O2 = 2,4-dichlorophenol + pyruvate + succinate + CO2. The protein operates within xenobiotic degradation; 2-(2,4-dichlorophenoxy)propanoate degradation. In terms of biological role, involved in the degradation of the phenoxypropionate herbicides. Catalyzes the enantiospecific cleavage of the ether bond in the herbicid S-dichlorprop ((S)-2-(2,4-dichlorophenoxy)propionate)(S-2,4-DP) and S-mecoprop ((S)-2-(4-chloro-2-methylphenoxy)propionate)(S-2,4-MCPP). It can also accept (RS)-2-(4-chloro-2-methylphenoxy)propionate ((RS)-2,4-MCPP) and phenoxyacetate derivatives such as 2,4-dichlorophenoxyacetate (2,4-D), however it can only accept 2-oxoglutarate as oxygen acceptor. The sequence is that of (S)-phenoxypropionate/alpha-ketoglutarate-dioxygenase from Sphingobium herbicidovorans (strain ATCC 700291 / DSM 11019 / CCUG 56400 / KCTC 2939 / LMG 18315 / NBRC 16415 / MH) (Sphingomonas herbicidovorans).